Consider the following 214-residue polypeptide: Oxaloacetate tautomerase fahd-1, mitochondrial (214 aa).

Mg(2+)-binding residues include glutamate 65, glutamate 67, and aspartate 96.

The protein belongs to the FAH family. Mg(2+) serves as cofactor. Requires Mn(2+) as cofactor. As to expression, widely expressed.

It localises to the mitochondrion. It catalyses the reaction oxaloacetate = enol-oxaloacetate. Tautomerase that converts enol-oxaloacetate, a strong inhibitor of succinate dehydrogenase, to the physiological keto form of oxaloacetate. This is Oxaloacetate tautomerase fahd-1, mitochondrial from Caenorhabditis elegans.